The following is a 193-amino-acid chain: Cuticle protein 18.7 (193 aa).

Its function is as follows. Component of the cuticle of migratory locust which contains more than 100 different structural proteins. This chain is Cuticle protein 18.7, found in Locusta migratoria (Migratory locust).